Consider the following 408-residue polypeptide: Peptidase T (408 aa).

Residue His78 participates in Zn(2+) binding. Asp80 is an active-site residue. Residue Asp140 coordinates Zn(2+). The active-site Proton acceptor is Glu173. Positions 174, 196, and 379 each coordinate Zn(2+).

The protein belongs to the peptidase M20B family. The cofactor is Zn(2+).

It localises to the cytoplasm. The enzyme catalyses Release of the N-terminal residue from a tripeptide.. Its function is as follows. Cleaves the N-terminal amino acid of tripeptides. In Shigella flexneri serotype 5b (strain 8401), this protein is Peptidase T.